Here is a 508-residue protein sequence, read N- to C-terminus: Replication factor C large subunit (508 aa).

43 to 50 (GSPGIGKT) contributes to the ATP binding site. The tract at residues 425 to 508 (AVEHSGGVFE…DQQSGLSDFM (84 aa)) is disordered. Acidic residues-rich tracts occupy residues 443 to 461 (GDSD…EESG) and 483 to 500 (TTDD…DDDQ).

It belongs to the activator 1 small subunits family. RfcL subfamily. Heteromultimer composed of small subunits (RfcS) and large subunits (RfcL).

Its function is as follows. Part of the RFC clamp loader complex which loads the PCNA sliding clamp onto DNA. The chain is Replication factor C large subunit from Haloarcula marismortui (strain ATCC 43049 / DSM 3752 / JCM 8966 / VKM B-1809) (Halobacterium marismortui).